A 391-amino-acid polypeptide reads, in one-letter code: MTTPLDTPTREPLPLAPAGPGKLVMSAPRRGKPPRHFVDLEPAERGPAMVELGEKAFRGKQLATQWFERLEDDPARMTDLPAASRTRIAEALLPTLLTPIRTLTADGGTTIKSLYRLHDGALVESVLMRYKNRDTICISSQAGCGMNCPFCATGQAGLTRNLSTAEIVEQVTAASRALARDEVPGGPGRVSNVVFMGMGEALANYKSAVAAVRRLVSPAPDGLGISARGVTMSTVGLVPAIDKFAQEGIAATLALSLHAPDDELRDELVPINQRWKVGEALDAARRYFEATGRRVSIEYALIKDINDQAWRADRLGKLLNARGRGWVHVNPIPLNPTPGSKWTASDPAVERAFVAALENRGIPTTVRDTRGSDIDGACGQLAAIGPEQPRA.

A disordered region spans residues Met1–Pro33. The span at Pro12–Gly21 shows a compositional bias: low complexity. Glu124 (proton acceptor) is an active-site residue. The Radical SAM core domain maps to Tyr130–Asp373. Cys137 and Cys378 are disulfide-bonded. Residues Cys144, Cys148, and Cys151 each contribute to the [4Fe-4S] cluster site. S-adenosyl-L-methionine is bound by residues Gly199–Glu200, Ser233, Ser256–His258, and Asn335. Cys378 acts as the S-methylcysteine intermediate in catalysis.

This sequence belongs to the radical SAM superfamily. RlmN family. [4Fe-4S] cluster serves as cofactor.

The protein localises to the cytoplasm. The enzyme catalyses adenosine(2503) in 23S rRNA + 2 reduced [2Fe-2S]-[ferredoxin] + 2 S-adenosyl-L-methionine = 2-methyladenosine(2503) in 23S rRNA + 5'-deoxyadenosine + L-methionine + 2 oxidized [2Fe-2S]-[ferredoxin] + S-adenosyl-L-homocysteine. The catalysed reaction is adenosine(37) in tRNA + 2 reduced [2Fe-2S]-[ferredoxin] + 2 S-adenosyl-L-methionine = 2-methyladenosine(37) in tRNA + 5'-deoxyadenosine + L-methionine + 2 oxidized [2Fe-2S]-[ferredoxin] + S-adenosyl-L-homocysteine. Specifically methylates position 2 of adenine 2503 in 23S rRNA and position 2 of adenine 37 in tRNAs. The polypeptide is Probable dual-specificity RNA methyltransferase RlmN (Kineococcus radiotolerans (strain ATCC BAA-149 / DSM 14245 / SRS30216)).